The primary structure comprises 177 residues: Small ribosomal subunit protein uS5 (177 aa).

The S5 DRBM domain maps to 21–84 (LKEKMVSVNR…DEARQRMVRV (64 aa)).

It belongs to the universal ribosomal protein uS5 family. In terms of assembly, part of the 30S ribosomal subunit. Contacts proteins S4 and S8.

With S4 and S12 plays an important role in translational accuracy. Its function is as follows. Located at the back of the 30S subunit body where it stabilizes the conformation of the head with respect to the body. The protein is Small ribosomal subunit protein uS5 of Nitrosomonas europaea (strain ATCC 19718 / CIP 103999 / KCTC 2705 / NBRC 14298).